Here is an 87-residue protein sequence, read N- to C-terminus: Down syndrome critical region protein 10 (87 aa).

As to expression, expressed in placenta and testis.

The chain is Down syndrome critical region protein 10 (DSCR10) from Homo sapiens (Human).